The following is a 162-amino-acid chain: MNEQEPAPKRGRRFKEQTPVQRALGLLVRREHSRKELNRKLLARGIEPDAAQAAVDRLTGEGWQDDARFAAAVVRNRAGSGYGPLHIRAELGTHGLDSEAISAAMATFQGDWTENARDLIHRRFGEQGPIDLPQRRKAADWLARRGFDGNSIRAATRFDLED.

This sequence belongs to the RecX family.

It localises to the cytoplasm. Modulates RecA activity. The polypeptide is Regulatory protein RecX (Xanthomonas oryzae pv. oryzae (strain PXO99A)).